We begin with the raw amino-acid sequence, 1179 residues long: Protein turtle homolog A (1179 aa).

The first 20 residues, 1–20 (MIWCLRLTILSLILSQGADG), serve as a signal peptide directing secretion. The Extracellular segment spans residues 21 to 734 (RRKPEVVSVV…TQLPGLLPQP (714 aa)). Ig-like domains follow at residues 24–124 (PEVV…DFAN), 136–216 (PQFQ…GSVT), 226–318 (PPVI…AYLT), 322–410 (PAQV…SPVT), and 418–498 (PAFI…VTIS). Intrachain disulfides connect C41/C108, C158/C206, C248/C301, C344/C395, and C440/C486. N-linked (GlcNAc...) asparagine glycosylation is present at N188. 2 consecutive Fibronectin type-III domains span residues 507–611 (SPHV…TTPA) and 623–718 (PLSP…TSGL). Residues N513 and N524 are each glycosylated (N-linked (GlcNAc...) asparagine). Residues 735–755 (VLAGVVGGVCFLGVAVLVSIL) traverse the membrane as a helical segment. The Cytoplasmic segment spans residues 756 to 1179 (AACLMNRRRA…ISYPEQATLL (424 aa)). Residues 766–807 (ARRHRKRLRQDPPLIFSPRGRSGPHSAPGSDSPDSVTKFKLQ) are disordered. At S809 the chain carries Phosphoserine. 4 disordered regions span residues 819–846 (LWGE…EPIC), 869–895 (ERSE…SGVP), 942–979 (PPLE…NLRA), and 1016–1079 (APRG…KRRN). A compositionally biased stretch (polar residues) spans 884-893 (LDCSSSSPSG). Residues 1020 to 1029 (SLTSQSSGRG) show a composition bias toward polar residues. A PDZ-binding motif is present at residues 1177–1179 (TLL).

The protein belongs to the immunoglobulin superfamily. Turtle family. As to quaternary structure, interacts with SHANK1 and probably with MAGI2. In terms of tissue distribution, expressed in hippocampal neurons (at protein level).

It is found in the cell membrane. Its subcellular location is the synapse. Functions in dendrite outgrowth and synapse maturation. The polypeptide is Protein turtle homolog A (Igsf9) (Rattus norvegicus (Rat)).